The primary structure comprises 236 residues: Phosphatidylserine decarboxylase proenzyme (236 aa).

Ser194 (schiff-base intermediate with substrate; via pyruvic acid) is an active-site residue. Ser194 carries the pyruvic acid (Ser); by autocatalysis modification.

The protein belongs to the phosphatidylserine decarboxylase family. PSD-A subfamily. As to quaternary structure, heterodimer of a large membrane-associated beta subunit and a small pyruvoyl-containing alpha subunit. The cofactor is pyruvate. Is synthesized initially as an inactive proenzyme. Formation of the active enzyme involves a self-maturation process in which the active site pyruvoyl group is generated from an internal serine residue via an autocatalytic post-translational modification. Two non-identical subunits are generated from the proenzyme in this reaction, and the pyruvate is formed at the N-terminus of the alpha chain, which is derived from the carboxyl end of the proenzyme. The post-translation cleavage follows an unusual pathway, termed non-hydrolytic serinolysis, in which the side chain hydroxyl group of the serine supplies its oxygen atom to form the C-terminus of the beta chain, while the remainder of the serine residue undergoes an oxidative deamination to produce ammonia and the pyruvoyl prosthetic group on the alpha chain.

The protein resides in the cell membrane. The catalysed reaction is a 1,2-diacyl-sn-glycero-3-phospho-L-serine + H(+) = a 1,2-diacyl-sn-glycero-3-phosphoethanolamine + CO2. It functions in the pathway phospholipid metabolism; phosphatidylethanolamine biosynthesis; phosphatidylethanolamine from CDP-diacylglycerol: step 2/2. Functionally, catalyzes the formation of phosphatidylethanolamine (PtdEtn) from phosphatidylserine (PtdSer). In Rhodospirillum rubrum (strain ATCC 11170 / ATH 1.1.1 / DSM 467 / LMG 4362 / NCIMB 8255 / S1), this protein is Phosphatidylserine decarboxylase proenzyme.